A 241-amino-acid chain; its full sequence is MPDYEKQKRNAAVEAASYVKTGMVIGIGTGTTARYLIEELGRRVSEENLKIKGVCTSKKSEELARAAGIEISENPEQIIDLTIDGADQVNLHGTLIKGGGGALLREKIVAYNSKEMYVIVDSRKIDDENFGSFPLPVEVVPFLHRMTLENLRKICPSTDLRKNSDGTLFITDNGNYIADMKFGRIRETNELEKKIKSIPGVVDVGLFNNIADKIFEGNDDGCNIYVVSEKGRIEKEKGQFK.

Substrate is bound by residues Thr29–Thr32, Asp84–Asp87, and Lys97–Gly100. Glu106 functions as the Proton acceptor in the catalytic mechanism. Lys124 contacts substrate.

The protein belongs to the ribose 5-phosphate isomerase family. As to quaternary structure, homodimer.

The enzyme catalyses aldehydo-D-ribose 5-phosphate = D-ribulose 5-phosphate. It participates in carbohydrate degradation; pentose phosphate pathway; D-ribose 5-phosphate from D-ribulose 5-phosphate (non-oxidative stage): step 1/1. Its function is as follows. Catalyzes the reversible conversion of ribose-5-phosphate to ribulose 5-phosphate. This chain is Ribose-5-phosphate isomerase A, found in Thermoplasma volcanium (strain ATCC 51530 / DSM 4299 / JCM 9571 / NBRC 15438 / GSS1).